Here is a 348-residue protein sequence, read N- to C-terminus: Uroporphyrinogen decarboxylase (348 aa).

Substrate contacts are provided by residues 29–33 (RQAGR), Asp79, Tyr155, Thr210, and His326.

It belongs to the uroporphyrinogen decarboxylase family. As to quaternary structure, homodimer.

It localises to the cytoplasm. The enzyme catalyses uroporphyrinogen III + 4 H(+) = coproporphyrinogen III + 4 CO2. It participates in porphyrin-containing compound metabolism; protoporphyrin-IX biosynthesis; coproporphyrinogen-III from 5-aminolevulinate: step 4/4. Its function is as follows. Catalyzes the decarboxylation of four acetate groups of uroporphyrinogen-III to yield coproporphyrinogen-III. This chain is Uroporphyrinogen decarboxylase, found in Rhodospirillum rubrum (strain ATCC 11170 / ATH 1.1.1 / DSM 467 / LMG 4362 / NCIMB 8255 / S1).